Consider the following 599-residue polypeptide: Crinkler effector protein 8 (599 aa).

Residues 1-17 (MVTLFCAVVGVAGSTFP) form the signal peptide. The segment at 18 to 52 (VDINENKSVGHLKKAIKEEKMYQFPADELQLFLAK) is LQLFLAK domain. Asn23 carries an N-linked (GlcNAc...) asparagine glycan. A DWL domain region spans residues 53-109 (AGGNAWLSSLTEDVKKLKKGEKTALVKSLTQEEKELQGEDPISECLEGMDPPKVKQI). An HVLVXXP motif motif is present at residues 110 to 116 (HVLVALP). The tract at residues 117 to 590 (PGTSSAPISD…EAAEQESQGK (474 aa)) is C-terminal D2 effector domain. Ser249, Ser281, and Ser385 each carry phosphoserine. One can recognise a Protein kinase domain in the interval 289 to 590 (LSKKLVWSYG…EAAEQESQGK (302 aa)). Asp470 acts as the Proton acceptor in catalysis. Ser474 and Ser587 each carry phosphoserine. The interval 577-599 (RFEREAAEQESQGKGVRKKHRRA) is disordered. The short motif at 590–599 (KGVRKKHRRA) is the Host nuclear localization signal element.

The protein in the N-terminal section; belongs to the Crinkler effector family. This sequence in the C-terminal section; belongs to the protein kinase superfamily. Dimerizes in host plants. Autophosphorylated at Ser-249, Ser-281, Ser-385, Ser-474 and Ser-587. Additional serines or threonines are also targeted for phosphorylation.

It localises to the secreted. Its subcellular location is the host nucleus. The catalysed reaction is L-seryl-[protein] + ATP = O-phospho-L-seryl-[protein] + ADP + H(+). It carries out the reaction L-threonyl-[protein] + ATP = O-phospho-L-threonyl-[protein] + ADP + H(+). Its function is as follows. Secreted effector that induces cell death when expressed in host plants. Acts as a kinase and is able to autophosphorylate, however its cell death inducing ability is not a direct result of its kinase activity, but rather a consequence of the phosphorylated state of the five identified serine residues in the CRN8 protein. The sequence is that of Crinkler effector protein 8 from Phytophthora infestans (Potato late blight agent).